Reading from the N-terminus, the 437-residue chain is Transcription factor AP-2-alpha (437 aa).

K10 is covalently cross-linked (Glycyl lysine isopeptide (Lys-Gly) (interchain with G-Cter in SUMO); alternate). Residue K10 forms a Glycyl lysine isopeptide (Lys-Gly) (interchain with G-Cter in SUMO2); alternate linkage. The segment at 14-107 (CEDRHDGTSN…GQRQSQESGL (94 aa)) is disordered. The PPxY motif signature appears at 57–62 (YFPPPY). 2 stretches are compositionally biased toward low complexity: residues 65-74 (IYPQSQDPYS) and 88-101 (QPQPQHPGWPGQRQ). Residues K177 and K184 each participate in a glycyl lysine isopeptide (Lys-Gly) (interchain with G-Cter in SUMO2) cross-link. Phosphoserine; by PKA is present on S239. Residues 280 to 410 (RRKAANVTLL…YLTEALKAMD (131 aa)) form an H-S-H (helix-span-helix), dimerization region. Polar residues predominate over residues 414 to 427 (LSNNPNSHTDNSAK). The segment at 414-437 (LSNNPNSHTDNSAKSSDKEEKHRK) is disordered. Residues 428–437 (SSDKEEKHRK) show a composition bias toward basic and acidic residues.

It belongs to the AP-2 family. As to quaternary structure, binds DNA as a dimer. Can form homodimers or heterodimers with other AP-2 family members. Interacts with WWOX. Interacts with UBE2I. Interacts with RALBP1 in a complex also containing EPN1 and NUMB during interphase and mitosis. Interacts with CITED4. Interacts with KCTD1; this interaction represses transcription activation. Interacts (via C-terminus) with CITED2 (via C-terminus); the interaction stimulates TFAP2A-transcriptional activation. Interacts (via N-terminus) with EP300 (via N-terminus); the interaction requires CITED2. Interacts with KCTD15; this interaction inhibits TFAP2A transcriptional activation. In terms of processing, sumoylated on Lys-10; which inhibits transcriptional activity.

It localises to the nucleus. Its function is as follows. Sequence-specific DNA-binding protein that interacts with inducible viral and cellular enhancer elements to regulate transcription of selected genes. AP-2 factors bind to the consensus sequence 5'-GCCNNNGGC-3' and activate genes involved in a large spectrum of important biological functions including proper eye, face, body wall, limb and neural tube development. They also suppress a number of genes including MCAM/MUC18, C/EBP alpha and MYC. AP-2-alpha is the only AP-2 protein required for early morphogenesis of the lens vesicle. Together with the CITED2 coactivator, stimulates the PITX2 P1 promoter transcription activation. Associates with chromatin to the PITX2 P1 promoter region. This chain is Transcription factor AP-2-alpha (Tfap2a), found in Mus musculus (Mouse).